A 218-amino-acid polypeptide reads, in one-letter code: Elongation factor Ts (218 aa).

The interval 82-85 is involved in Mg(2+) ion dislocation from EF-Tu; that stretch reads TDFV.

Belongs to the EF-Ts family.

The protein localises to the cytoplasm. Its function is as follows. Associates with the EF-Tu.GDP complex and induces the exchange of GDP to GTP. It remains bound to the aminoacyl-tRNA.EF-Tu.GTP complex up to the GTP hydrolysis stage on the ribosome. In Prochlorococcus marinus (strain AS9601), this protein is Elongation factor Ts.